The following is a 288-amino-acid chain: 4-diphosphocytidyl-2-C-methyl-D-erythritol kinase (288 aa).

Residue lysine 11 is part of the active site. 100–110 (PIAAGLGSGSS) is a binding site for ATP. The active site involves aspartate 140.

It belongs to the GHMP kinase family. IspE subfamily.

The enzyme catalyses 4-CDP-2-C-methyl-D-erythritol + ATP = 4-CDP-2-C-methyl-D-erythritol 2-phosphate + ADP + H(+). Its pathway is isoprenoid biosynthesis; isopentenyl diphosphate biosynthesis via DXP pathway; isopentenyl diphosphate from 1-deoxy-D-xylulose 5-phosphate: step 3/6. Functionally, catalyzes the phosphorylation of the position 2 hydroxy group of 4-diphosphocytidyl-2C-methyl-D-erythritol. This chain is 4-diphosphocytidyl-2-C-methyl-D-erythritol kinase, found in Wolbachia sp. subsp. Drosophila simulans (strain wRi).